A 62-amino-acid chain; its full sequence is Phycobilisome degradation protein NblA homolog 1 (62 aa).

The protein to Synechococcus PCC 7942 NblA and some, to chloroplast ycf18.

This chain is Phycobilisome degradation protein NblA homolog 1, found in Synechocystis sp. (strain ATCC 27184 / PCC 6803 / Kazusa).